We begin with the raw amino-acid sequence, 446 residues long: G patch domain-containing protein 4 (446 aa).

Met-1 is subject to N-acetylmethionine. The residue at position 4 (Thr-4) is a Phosphothreonine. In terms of domain architecture, G-patch spans 11 to 57; sequence GMKFAEEQLLKHGWTQGKGLGRKENGITQALRVTLKQDTHGVGHDPA. A Glycyl lysine isopeptide (Lys-Gly) (interchain with G-Cter in SUMO2) cross-link involves residue Lys-46. The residue at position 116 (Thr-116) is a Phosphothreonine. Disordered stretches follow at residues 116–140 and 188–446; these read TSGG…SKSP and QDPG…KKRD. Phosphoserine is present on residues Ser-128, Ser-130, and Ser-139. A coiled-coil region spans residues 166 to 251; the sequence is TMKAKLARLE…KKKRRHQEGK (86 aa). Residues 219 to 237 show a composition bias toward basic and acidic residues; sequence ASERNDADEKHPEHAEQNI. Positions 238-248 are enriched in basic residues; it reads RKSKKKKRRHQ. Basic and acidic residues-rich tracts occupy residues 249-268, 297-328, 363-375, and 392-409; these read EGKV…KEDA, HHEE…ESRA, REAE…DGRS, and LDVR…ESRA. 2 stretches are compositionally biased toward basic residues: residues 416–427 and 437–446; these read RGKRKRQQHPKK and KAKKKQKKRD.

This is G patch domain-containing protein 4 (GPATCH4) from Homo sapiens (Human).